A 441-amino-acid polypeptide reads, in one-letter code: NADH-quinone oxidoreductase subunit D (441 aa).

This sequence belongs to the complex I 49 kDa subunit family. As to quaternary structure, NDH-1 is composed of 14 different subunits. Subunits NuoB, C, D, E, F, and G constitute the peripheral sector of the complex.

It is found in the cell membrane. The catalysed reaction is a quinone + NADH + 5 H(+)(in) = a quinol + NAD(+) + 4 H(+)(out). In terms of biological role, NDH-1 shuttles electrons from NADH, via FMN and iron-sulfur (Fe-S) centers, to quinones in the respiratory chain. The immediate electron acceptor for the enzyme in this species is believed to be a menaquinone. Couples the redox reaction to proton translocation (for every two electrons transferred, four hydrogen ions are translocated across the cytoplasmic membrane), and thus conserves the redox energy in a proton gradient. The protein is NADH-quinone oxidoreductase subunit D of Mycobacterium avium (strain 104).